We begin with the raw amino-acid sequence, 134 residues long: Nogalonic acid methyl ester cyclase (134 aa).

Nogalaviketone is bound at residue Gln95. Asp111 (proton donor/acceptor) is an active-site residue.

This sequence belongs to the polyketide cyclase DnrD family. As to quaternary structure, homotetramer. Dimer of dimers.

The catalysed reaction is nogalaviketone = methyl nogalonate. It functions in the pathway antibiotic biosynthesis. Functionally, involved in the biosynthesis of the aromatic polyketide antibiotic nogalamycin. Catalyzes the formation of nogalaviketone from nogalonic acid methyl ester (NAME), the last ring-closure step in the biosynthesis of nogalamycin. The polypeptide is Nogalonic acid methyl ester cyclase (Streptomyces nogalater).